We begin with the raw amino-acid sequence, 231 residues long: MPKHGKKYLEAAKKVDKTKLYEPAEAFSLVKELSFAKFDETVEVAVKLGVDPRHADQQVRGAVVLPHGTGKTRKVLVFAKGEKAKEAEAAGADYVGAEEYIEKIAQGWIDFDVVVATPDMMGAVGRLGKILGPKGLMPSPKTGTVTFEVAKAIAEIKAGKIEYRVDKAGIVHVPIGKVSFPVEKLVENFNTLMDALIKAKPAGAKGQYLKGVTVSSTMGPGIKINHLKLVK.

The protein belongs to the universal ribosomal protein uL1 family. As to quaternary structure, part of the 50S ribosomal subunit.

Functionally, binds directly to 23S rRNA. The L1 stalk is quite mobile in the ribosome, and is involved in E site tRNA release. Its function is as follows. Protein L1 is also a translational repressor protein, it controls the translation of the L11 operon by binding to its mRNA. The polypeptide is Large ribosomal subunit protein uL1 (Carboxydothermus hydrogenoformans (strain ATCC BAA-161 / DSM 6008 / Z-2901)).